The following is a 315-amino-acid chain: 4-diphosphocytidyl-2-C-methyl-D-erythritol kinase (315 aa).

Lys8 is a catalytic residue. 93–103 (PVAAGLAGGSS) provides a ligand contact to ATP. Residue Asp135 is part of the active site.

Belongs to the GHMP kinase family. IspE subfamily.

The enzyme catalyses 4-CDP-2-C-methyl-D-erythritol + ATP = 4-CDP-2-C-methyl-D-erythritol 2-phosphate + ADP + H(+). It functions in the pathway isoprenoid biosynthesis; isopentenyl diphosphate biosynthesis via DXP pathway; isopentenyl diphosphate from 1-deoxy-D-xylulose 5-phosphate: step 3/6. In terms of biological role, catalyzes the phosphorylation of the position 2 hydroxy group of 4-diphosphocytidyl-2C-methyl-D-erythritol. The sequence is that of 4-diphosphocytidyl-2-C-methyl-D-erythritol kinase from Heliobacterium modesticaldum (strain ATCC 51547 / Ice1).